Here is a 436-residue protein sequence, read N- to C-terminus: MAQQAIVTMSALRRTMEVSDSGDVSIDISAEDSNDSFHLEESVDDCMDDCKPNNRPNPISMKPAKRRVFMVPKRERSKTPVQHTSPLNRLYPNVVLGKQHGYKQRPAPSARSRRPQPYSARKDSAAKPQSTPSNQNPLTELLKNVDPAIASRITEMRIPRSMLRTPSGQPFAHWLMPSAEDSSKFINVNPVNMEVEEHVNVVVRRCTEWALISSRLQDKSISTKYLAENFYDLRDFAQRSINKSAWINLRREAIANAGFVNLCAFADEMMMWLQLNLNNQGSWKACREDIILTGAPDMCFHALQKVRAFIKCFLRERHQRALVNALCHIICFEGGIKQAATLCQELFFDFKVGLMVLYFLTPYAFLYSHTIPQCNFGGYFSKCVAQYTPGAVTGLLNSAIEDHYKDCTSQDCTNLITAIVSPETSNKGLLFFPLPM.

A disordered region spans residues 71–140 (VPKRERSKTP…TPSNQNPLTE (70 aa)). Residues 104-119 (QRPAPSARSRRPQPYS) show a composition bias toward low complexity. Over residues 127-138 (KPQSTPSNQNPL) the composition is skewed to polar residues.

This sequence belongs to the herpesviridae UL69 family.

It is found in the host nucleus. It localises to the host cytoplasm. Acts at a post-transcriptional level to regulate viral gene expression. This chain is Immediate-early phosphoprotein 57 (57), found in Alcelaphine herpesvirus 1 (strain C500) (AlHV-1).